The chain runs to 554 residues: 4-coumarate--CoA ligase 3 (554 aa).

Ser-188, Ser-189, Gly-190, Thr-191, Thr-192, and Lys-196 together coordinate ATP. Residues Tyr-238 and Ser-242 each coordinate (E)-4-coumaroyl-AMP. CoA is bound at residue Lys-259. Residues 261 to 330 (DLGALVDLVR…AKIPNAVLGQ (70 aa)) form an SBD1 region. The (E)-4-coumaroyl-AMP site is built by Ala-308, Gln-330, Gly-331, Thr-335, and Met-343. Positions 330, 331, and 335 each coordinate ATP. The SBD2 stretch occupies residues 331–398 (GYGMTEAGPV…IRGEQIMKGY (68 aa)). The ATP site is built by Asp-419 and Arg-434. 2 residues coordinate (E)-4-coumaroyl-AMP: Lys-436 and Lys-440. Positions 442 and 443 each coordinate CoA. Lys-525 is a binding site for ATP.

It belongs to the ATP-dependent AMP-binding enzyme family. The cofactor is Mg(2+). In terms of tissue distribution, expressed in root exodermis and epidermis cells, stem vascular cells, leaf developing vascular bundle cells and parenchyma cells, lemma, palea, stamens and pistil.

The enzyme catalyses (E)-ferulate + ATP + CoA = (E)-feruloyl-CoA + AMP + diphosphate. The catalysed reaction is (E)-4-coumarate + ATP + CoA = (E)-4-coumaroyl-CoA + AMP + diphosphate. It catalyses the reaction (E)-caffeate + ATP + CoA = (E)-caffeoyl-CoA + AMP + diphosphate. It carries out the reaction (E)-cinnamate + ATP + CoA = (E)-cinnamoyl-CoA + AMP + diphosphate. The enzyme catalyses (E)-ferulate + ATP + H(+) = (E)-feruloyl-AMP + diphosphate. The catalysed reaction is (E)-feruloyl-AMP + CoA = (E)-feruloyl-CoA + AMP + H(+). It catalyses the reaction (E)-4-coumarate + ATP + H(+) = (E)-4-coumaroyl-AMP + diphosphate. It carries out the reaction (E)-4-coumaroyl-AMP + CoA = (E)-4-coumaroyl-CoA + AMP + H(+). The enzyme catalyses (E)-caffeate + ATP + H(+) = (E)-caffeoyl-AMP + diphosphate. The catalysed reaction is (E)-caffeoyl-AMP + CoA = (E)-caffeoyl-CoA + AMP + H(+). The protein operates within phytoalexin biosynthesis; 3,4',5-trihydroxystilbene biosynthesis; 3,4',5-trihydroxystilbene from trans-4-coumarate: step 1/2. Involved in the phenylpropanoid metabolism by mediating the activation of a number of hydroxycinnamates for the biosynthesis of monolignols and other phenolic secondary metabolites. Catalyzes the formation of CoA esters of cinnamate, 4-coumarate, caffeate and ferulate. Is more efficient with substrates in the following order: ferulate &gt; 4-coumarate &gt; caffeate &gt; cinnamate. Possesses very high activity compared to 4CL1, 4CL2, 4CL4 and 4CL5. Cannot convert sinapate to its corresponding CoA ester. May play a role in the synthesis of lignin as well as other phenolic compounds. Follows a two-step reaction mechanism, wherein the carboxylate substrate first undergoes adenylation by ATP, followed by a thioesterification in the presence of CoA to yield the final CoA thioester. This Oryza sativa subsp. japonica (Rice) protein is 4-coumarate--CoA ligase 3.